The primary structure comprises 243 residues: Probable fructoselysine utilization operon transcriptional repressor (243 aa).

The 69-residue stretch at 10–78 (QLLYATVRQR…QGKGTFVQSQ (69 aa)) folds into the HTH gntR-type domain. Residues 38–57 (ENELCTQYNVSRITIRKAIS) constitute a DNA-binding region (H-T-H motif).

It participates in carbohydrate metabolism; fructoselysine degradation [regulation]. In terms of biological role, may regulate the transcription of the frlABCDR operon, involved in the utilization of fructoselysine and psicoselysine. This chain is Probable fructoselysine utilization operon transcriptional repressor, found in Escherichia coli (strain K12).